The chain runs to 265 residues: uncharacterized protein (265 aa).

It belongs to the ycf23 family.

Its subcellular location is the plastid. The protein resides in the chloroplast. This is an uncharacterized protein from Porphyra purpurea (Red seaweed).